The sequence spans 172 residues: Peptide methionine sulfoxide reductase MsrA (172 aa).

The active site involves cysteine 12.

The protein belongs to the MsrA Met sulfoxide reductase family.

It carries out the reaction L-methionyl-[protein] + [thioredoxin]-disulfide + H2O = L-methionyl-(S)-S-oxide-[protein] + [thioredoxin]-dithiol. The catalysed reaction is [thioredoxin]-disulfide + L-methionine + H2O = L-methionine (S)-S-oxide + [thioredoxin]-dithiol. Functionally, has an important function as a repair enzyme for proteins that have been inactivated by oxidation. Catalyzes the reversible oxidation-reduction of methionine sulfoxide in proteins to methionine. The polypeptide is Peptide methionine sulfoxide reductase MsrA (Ligilactobacillus salivarius (strain UCC118) (Lactobacillus salivarius)).